The chain runs to 436 residues: Aminopeptidase C (436 aa).

Catalysis depends on residues C68, H356, and N378.

This sequence belongs to the peptidase C1 family. Homohexamer.

It carries out the reaction Inactivates bleomycin B2 (a cytotoxic glycometallopeptide) by hydrolysis of a carboxyamide bond of beta-aminoalanine, but also shows general aminopeptidase activity. The specificity varies somewhat with source, but amino acid arylamides of Met, Leu and Ala are preferred.. Its function is as follows. Hydrolyzes naphthylamide-substituted amino acids as well as di- and tripeptides in which the half-cystine residue is involved in a disulfide loop, notably in oxytocin and vasopressin. Also has a bleomycin hydrolase activity. The polypeptide is Aminopeptidase C (pepC) (Lactococcus lactis subsp. lactis (strain IL1403) (Streptococcus lactis)).